A 91-amino-acid polypeptide reads, in one-letter code: ATP-dependent Clp protease adapter protein ClpS (91 aa).

The protein belongs to the ClpS family. Binds to the N-terminal domain of the chaperone ClpA.

Involved in the modulation of the specificity of the ClpAP-mediated ATP-dependent protein degradation. The chain is ATP-dependent Clp protease adapter protein ClpS from Synechococcus sp. (strain ATCC 27144 / PCC 6301 / SAUG 1402/1) (Anacystis nidulans).